A 253-amino-acid polypeptide reads, in one-letter code: 2-succinyl-6-hydroxy-2,4-cyclohexadiene-1-carboxylate synthase (253 aa).

The region spanning 11-147 (PWLVCLHGLF…PEALQDWYQQ (137 aa)) is the AB hydrolase-1 domain.

This sequence belongs to the AB hydrolase superfamily. MenH family. As to quaternary structure, monomer.

It catalyses the reaction 5-enolpyruvoyl-6-hydroxy-2-succinyl-cyclohex-3-ene-1-carboxylate = (1R,6R)-6-hydroxy-2-succinyl-cyclohexa-2,4-diene-1-carboxylate + pyruvate. It participates in quinol/quinone metabolism; 1,4-dihydroxy-2-naphthoate biosynthesis; 1,4-dihydroxy-2-naphthoate from chorismate: step 3/7. The protein operates within quinol/quinone metabolism; menaquinone biosynthesis. Functionally, catalyzes a proton abstraction reaction that results in 2,5-elimination of pyruvate from 2-succinyl-5-enolpyruvyl-6-hydroxy-3-cyclohexene-1-carboxylate (SEPHCHC) and the formation of 2-succinyl-6-hydroxy-2,4-cyclohexadiene-1-carboxylate (SHCHC). The chain is 2-succinyl-6-hydroxy-2,4-cyclohexadiene-1-carboxylate synthase from Pectobacterium atrosepticum (strain SCRI 1043 / ATCC BAA-672) (Erwinia carotovora subsp. atroseptica).